Consider the following 718-residue polypeptide: Sodium/myo-inositol cotransporter (718 aa).

Residues 1-9 (MRAVLETAD) are Extracellular-facing. Residues 10-29 (IAIVALYFILVMCIGFFAMW) traverse the membrane as a helical segment. Residues 30 to 38 (KSNRSTVSG) lie on the Cytoplasmic side of the membrane. The chain crosses the membrane as a helical span at residues 39 to 57 (YFLAGRSMTWVAIGASLFV). The Extracellular segment spans residues 58–86 (SNIGSEHFIGLAGSGAASGFAVGAWEFNA). The chain crosses the membrane as a helical span at residues 87-110 (LLLLQLLGWVFIPIYIRSGVYTMP). Residues 111 to 123 (EYLSKRFGGHRIQ) are Cytoplasmic-facing. The helical transmembrane segment at 124-144 (VYFAALSLILYIFTKLSVDLY) threads the bilayer. The Extracellular portion of the chain corresponds to 145-157 (SGALFIQESMGWN). A helical membrane pass occupies residues 158-183 (LYVSVILLIGMTALLTVTGGLVAVIY). The Cytoplasmic portion of the chain corresponds to 184 to 186 (TDT). The helical transmembrane segment at 187–205 (LQALLMIVGALTLMVISMM) threads the bilayer. Over 206 to 303 (EIGGFEEVKR…HAKGSTLMAG (98 aa)) the chain is Extracellular. A glycan (N-linked (GlcNAc...) asparagine) is linked at Asn-232. A helical membrane pass occupies residues 304 to 324 (FLKLLPMFIIVVPGMISRILF). Over 325–353 (ADDIACINPEHCMQVCGSRAGCSNIAYPR) the chain is Cytoplasmic. Residues 354–376 (LVMKLVPVGLRGLMMAVMIAALM) traverse the membrane as a helical segment. The Extracellular portion of the chain corresponds to 377–406 (SDLDSIFNSASTIFTLDVYKLIRKSASSRE). The chain crosses the membrane as a helical span at residues 407–430 (LMIVGRIFVAFMVVISIAWVPIIV). Over 431–443 (EMQGGQMYLYIQE) the chain is Cytoplasmic. Residues 444-462 (VADYLTPPVAALFLLAIFW) form a helical membrane-spanning segment. Residues 463-510 (KRCNEQGAFYGGMAGFILVVVRLTLAFAYRAPECDQPDNRPVFIKDIH) lie on the Extracellular side of the membrane. Residues 511–532 (YMYVATALFWITGLITVIVSLL) traverse the membrane as a helical segment. The Cytoplasmic portion of the chain corresponds to 533 to 695 (TPPPTKEQIR…QMLEEPPQVK (163 aa)). Ser-594 and Ser-632 each carry phosphoserine. Residues 696 to 716 (VILNIGLFGVCSLGIFMFVYF) traverse the membrane as a helical segment. Residues 717 to 718 (SL) lie on the Extracellular side of the membrane.

This sequence belongs to the sodium:solute symporter (SSF) (TC 2.A.21) family. As to quaternary structure, interacts with KCNQ2 (via the pore module). Interacts with KCNQ1; this interaction is direct. Forms coregulatory complexes with ion channels KCNQ2-KCNQ3 and KCNQ1-KCNE2.

It localises to the apical cell membrane. Its subcellular location is the basolateral cell membrane. Its function is as follows. Electrogenic Na(+)-coupled sugar symporter that actively transports myo-inositol and its stereoisomer scyllo-inositol across the plasma membrane, with a Na(+) to sugar coupling ratio of 2:1. Maintains myo-inositol concentration gradient that defines cell volume and fluid balance during osmotic stress, in particular in the fetoplacental unit and central nervous system. Forms coregulatory complexes with voltage-gated K(+) ion channels, allosterically altering ion selectivity, voltage dependence and gating kinetics of the channel. In turn, K(+) efflux through the channel forms a local electrical gradient that modulates electrogenic Na(+)-coupled myo-inositol influx through the transporter. Associates with KCNQ1-KCNE2 channel in the apical membrane of choroid plexus epithelium and regulates the myo-inositol gradient between blood and cerebrospinal fluid with an impact on neuron excitability. Associates with KCNQ2-KCNQ3 channel altering ion selectivity, increasing Na(+) and Cs(+) permeation relative to K(+) permeation. Provides myo-inositol precursor for biosynthesis of phosphoinositides such as PI(4,5)P2, thus indirectly affecting the activity of phosphoinositide-dependent ion channels and Ca(2+) signaling upon osmotic stress. This Bos taurus (Bovine) protein is Sodium/myo-inositol cotransporter (SLC5A3).